The sequence spans 132 residues: Small ribosomal subunit protein uS11 (132 aa).

Belongs to the universal ribosomal protein uS11 family. As to quaternary structure, part of the 30S ribosomal subunit. Interacts with proteins S7 and S18. Binds to IF-3.

Functionally, located on the platform of the 30S subunit, it bridges several disparate RNA helices of the 16S rRNA. Forms part of the Shine-Dalgarno cleft in the 70S ribosome. The sequence is that of Small ribosomal subunit protein uS11 from Cyanothece sp. (strain PCC 7425 / ATCC 29141).